We begin with the raw amino-acid sequence, 41 residues long: Large ribosomal subunit protein bL36B (41 aa).

Belongs to the bacterial ribosomal protein bL36 family.

In Neisseria meningitidis serogroup B (strain ATCC BAA-335 / MC58), this protein is Large ribosomal subunit protein bL36B.